A 276-amino-acid chain; its full sequence is NH(3)-dependent NAD(+) synthetase (276 aa).

Gly43–Ser50 provides a ligand contact to ATP. Position 49 (Asp49) interacts with Mg(2+). Residue Arg146 participates in deamido-NAD(+) binding. Thr166 contributes to the ATP binding site. Glu171 provides a ligand contact to Mg(2+). The deamido-NAD(+) site is built by Lys179 and Asp186. Residues Lys195 and Thr217 each contribute to the ATP site. Position 266–267 (His266–Lys267) interacts with deamido-NAD(+).

It belongs to the NAD synthetase family. In terms of assembly, homodimer.

It catalyses the reaction deamido-NAD(+) + NH4(+) + ATP = AMP + diphosphate + NAD(+) + H(+). Its pathway is cofactor biosynthesis; NAD(+) biosynthesis; NAD(+) from deamido-NAD(+) (ammonia route): step 1/1. Its function is as follows. Catalyzes the ATP-dependent amidation of deamido-NAD to form NAD. Uses ammonia as a nitrogen source. The protein is NH(3)-dependent NAD(+) synthetase of Vibrio parahaemolyticus serotype O3:K6 (strain RIMD 2210633).